An 86-amino-acid polypeptide reads, in one-letter code: Putative defensin-like protein 9 (86 aa).

The N-terminal stretch at 1–29 (MKSSMQLISTLFFLVILVVAPGMKMVVEG) is a signal peptide. Gln30 is modified (pyrrolidone carboxylic acid). Cystine bridges form between Cys34/Cys79, Cys45/Cys65, Cys51/Cys73, and Cys55/Cys75.

This sequence belongs to the DEFL family.

The protein resides in the secreted. This chain is Putative defensin-like protein 9 (LCR76), found in Arabidopsis thaliana (Mouse-ear cress).